Reading from the N-terminus, the 498-residue chain is 3-octaprenyl-4-hydroxybenzoate carboxy-lyase (498 aa).

Residue asparagine 177 participates in Mn(2+) binding. Residues 180–182 (IYR), 194–196 (RWL), and 199–200 (RG) each bind prenylated FMN. Glutamate 243 is a Mn(2+) binding site. Aspartate 292 acts as the Proton donor in catalysis.

The protein belongs to the UbiD family. Homohexamer. It depends on prenylated FMN as a cofactor. Mn(2+) serves as cofactor.

Its subcellular location is the cell membrane. The enzyme catalyses a 4-hydroxy-3-(all-trans-polyprenyl)benzoate + H(+) = a 2-(all-trans-polyprenyl)phenol + CO2. The protein operates within cofactor biosynthesis; ubiquinone biosynthesis. Catalyzes the decarboxylation of 3-octaprenyl-4-hydroxy benzoate to 2-octaprenylphenol, an intermediate step in ubiquinone biosynthesis. The polypeptide is 3-octaprenyl-4-hydroxybenzoate carboxy-lyase (Methylococcus capsulatus (strain ATCC 33009 / NCIMB 11132 / Bath)).